Here is a 181-residue protein sequence, read N- to C-terminus: Swi1-interacting protein swi3 (181 aa).

Positions 1-47 (MSTAASDSGVEKLVEENKREEVKKNEEEKEFDLGLEENPDSVKKPRK) are disordered. The segment covering 9 to 27 (GVEKLVEENKREEVKKNEE) has biased composition (basic and acidic residues). Residues 28-39 (EKEFDLGLEENP) show a composition bias toward acidic residues.

It belongs to the CSM3 family. Fork protection complex (FPC) consisting of swi1 and swi3 interacts with mat1 cis-acting sequences and mat1-proximal polar-terminator of replication (RTS1).

The protein localises to the nucleus. In terms of biological role, forms a fork protection complex (FPC) with swi1. FPC coordinates leading and lagging strand synthesis and moves with the replication fork. It is required for programmed fork-pausing which is necessary for mating-type switching. FPC stabilizes replication forks in a configuration that is recognized by replication checkpoint sensors. It is involved in termination at the mat1-proximal polar-terminator of replication (RTS1) and also required for activation of the Rad53-like checkpoint kinase cds1. The protein is Swi1-interacting protein swi3 (swi3) of Schizosaccharomyces pombe (strain 972 / ATCC 24843) (Fission yeast).